The chain runs to 41 residues: U-theraphotoxin-Lk1a (41 aa).

Cystine bridges form between cysteine 1–cysteine 16, cysteine 8–cysteine 21, and cysteine 15–cysteine 36.

It belongs to the neurotoxin 14 (magi-1) family. 08 (Ltx-4) subfamily. Expressed by the venom gland.

It is found in the secreted. Functionally, toxin that causes irreversible contractile paralysis in adult Aedes aegypti resulting in 100% mortality after 24 hours. In Lasiodora klugi (Bahia scarlet tarantula), this protein is U-theraphotoxin-Lk1a.